The primary structure comprises 314 residues: MQKPLAIFLMGPTASGKTDLAIALRQQIPVEVISVDSALIYKGMDIGTAKPSKAELELTPHRLIDILDPSESYSVMNFREDALREMADITAQGKIPLLVGGTMLYYKALLDGLSPLPSADPDIRAEIEAKAEQIGWAGLHQELVNIDPISAKRINPNDSQRINRALEVFYISGKTMTELTAQQGEAIPYEIMQFAIVPQERAVLHQRIEQRFHKMINLGFEQEVRRLYQRGDLNVDLPSIRCVGYRQMWEYLEGQTSLDEAIFKGICATRQLAKRQITWLRGWTSEIEWLDSLDPENSYKKMIEKVQQKHLKLW.

11-18 (GPTASGKT) serves as a coordination point for ATP. 13–18 (TASGKT) provides a ligand contact to substrate. Interaction with substrate tRNA stretches follow at residues 36-39 (DSAL), 160-164 (QRINR), 241-246 (RCVGYR), and 274-281 (KRQITWLR).

It belongs to the IPP transferase family. In terms of assembly, monomer. The cofactor is Mg(2+).

The enzyme catalyses adenosine(37) in tRNA + dimethylallyl diphosphate = N(6)-dimethylallyladenosine(37) in tRNA + diphosphate. Its function is as follows. Catalyzes the transfer of a dimethylallyl group onto the adenine at position 37 in tRNAs that read codons beginning with uridine, leading to the formation of N6-(dimethylallyl)adenosine (i(6)A). This chain is tRNA dimethylallyltransferase, found in Glaesserella parasuis serovar 5 (strain SH0165) (Haemophilus parasuis).